Reading from the N-terminus, the 963-residue chain is Importin-13 (963 aa).

20 HEAT repeats span residues 24-54 (ENVEKALHQLYYDPNIENKNLAQKWLMQAQA), 56-88 (PQAWHFSWQLLQPDKVPEIQYFGASALHIKISR), 95-135 (TDQY…LSMM), 142-179 (AVADMVRLFQAEDSPVDSQGRCLALLELLTVLPEEFQT), 194-231 (LAVECGAVFPLLEQLLQQPSSPSCVRQKVLKCFSSWVQ), 236-268 (LQDCEALIQAAFAALQDSELFDSSVEAIVNAIS), 276-325 (VNTL…ALLD), 330-372 (WQSF…DDIL), 375-438 (EAEK…YEML), 440-476 (AELLSNLYDKLGRLLTSSEEPYSWQHTEALLYGFQSI), 487-522 (VVPGLIGLIPRISISNVQLADTVMFTIGALSEWLAD), 524-558 (PVMINSVLPLVLHALGNPELSISSVSTLKKICREC), 562-600 (LPPYAANIVAVSQDVLMKQIHKTSQCMWLMQALGFLLSA), 603-648 (VEEI…SNLF), 676-716 (PVVV…VKTL), 720-754 (FAPMVPQLCEMLGRMYSTIPQASALDLTRQLVHIF), 761-803 (FPPI…ALKR), 815-845 (VKAVFQCAVLALKFPEAPTVKASCGFFTELL), 860-893 (EDGRMLLIAVLEAIGGQASRSLMDCFADILFALN), and 897-931 (FSLLSVWIKEALQAPGFPSARLSPEQKDTFSQQIL). One can recognise an Importin N-terminal domain in the interval 45-111 (AQKWLMQAQA…KAQLFTQITR (67 aa)).

It belongs to the importin beta family. In terms of assembly, interacts with UBC9, RAN, RBM8A, eIF-1A and PAX6.

Its subcellular location is the cytoplasm. The protein localises to the nucleus. Functionally, functions in nuclear protein import as nuclear transport receptor. Serves as receptor for nuclear localization signals (NLS) in cargo substrates. Is thought to mediate docking of the importin/substrate complex to the nuclear pore complex (NPC) through binding to nucleoporin and the complex is subsequently translocated through the pore by an energy requiring, Ran-dependent mechanism. At the nucleoplasmic side of the NPC, Ran binds to the importin, the importin/substrate complex dissociates and importin is re-exported from the nucleus to the cytoplasm where GTP hydrolysis releases Ran. The directionality of nuclear import is thought to be conferred by an asymmetric distribution of the GTP- and GDP-bound forms of Ran between the cytoplasm and nucleus. Mediates the nuclear import of UBC9, the RBM8A/MAGOH complex, PAX6 and probably other members of the paired homeobox family. Also mediates nuclear export of eIF-1A, and the cytoplasmic release of eIF-1A is triggered by the loading of import substrates onto IPO13. The chain is Importin-13 (IPO13) from Bos taurus (Bovine).